Consider the following 121-residue polypeptide: uncharacterized protein (121 aa).

Disordered stretches follow at residues 38–76 (NQMA…KYQQ) and 91–121 (SVLR…KQEN). The segment covering 43-63 (KRNKQSKKPKQTSKGVKKSSK) has biased composition (basic residues). Over residues 64-76 (QNKNSSKNNKYQQ) the composition is skewed to low complexity.

This is an uncharacterized protein from Schizosaccharomyces pombe (strain 972 / ATCC 24843) (Fission yeast).